Consider the following 569-residue polypeptide: Urease subunit alpha (569 aa).

Positions 131 to 569 (GSIDTHIHFI…VPMAQRYFLL (439 aa)) constitute a Urease domain. Positions 136, 138, and 219 each coordinate Ni(2+). Lys-219 carries the post-translational modification N6-carboxylysine. His-221 lines the substrate pocket. 2 residues coordinate Ni(2+): His-248 and His-274. His-322 (proton donor) is an active-site residue. A Ni(2+)-binding site is contributed by Asp-362.

The protein belongs to the metallo-dependent hydrolases superfamily. Urease alpha subunit family. In terms of assembly, heterotrimer of UreA (gamma), UreB (beta) and UreC (alpha) subunits. Three heterotrimers associate to form the active enzyme. Ni cation serves as cofactor. Carboxylation allows a single lysine to coordinate two nickel ions.

It is found in the cytoplasm. The catalysed reaction is urea + 2 H2O + H(+) = hydrogencarbonate + 2 NH4(+). It participates in nitrogen metabolism; urea degradation; CO(2) and NH(3) from urea (urease route): step 1/1. This chain is Urease subunit alpha, found in Prochlorococcus marinus (strain MIT 9301).